Here is a 136-residue protein sequence, read N- to C-terminus: Large ribosomal subunit protein uL16 (136 aa).

It belongs to the universal ribosomal protein uL16 family. In terms of assembly, part of the 50S ribosomal subunit.

In terms of biological role, binds 23S rRNA and is also seen to make contacts with the A and possibly P site tRNAs. The sequence is that of Large ribosomal subunit protein uL16 from Pelagibacter ubique (strain HTCC1062).